The primary structure comprises 846 residues: Neurofilament medium polypeptide (846 aa).

Residues 1 to 10 show a composition bias toward polar residues; the sequence is MSYTLDSLGN. The disordered stretch occupies residues 1-52; sequence MSYTLDSLGNPSAYRRVPTETRSSFSRVSGSPSSGFRSQSWSRGSPSTVSSS. At serine 2 the chain carries N-acetylserine. The segment at 2–104 is head; that stretch reads SYTLDSLGNP…LSRSNEKEQL (103 aa). Over residues 22–45 the composition is skewed to low complexity; that stretch reads RSSFSRVSGSPSSGFRSQSWSRGS. At serine 31 the chain carries Phosphoserine. The residue at position 43 (arginine 43) is an Omega-N-methylarginine. Threonine 48 is a glycosylation site (O-linked (GlcNAc) threonine). Phosphoserine is present on serine 98. The IF rod domain occupies 100 to 411; the sequence is EKEQLQGLND…KLLEGEETRF (312 aa). The coil 1A stretch occupies residues 104–135; it reads LQGLNDRFAGYIEKVHYLEQQNKEIEAEIHAL. The segment at 136 to 148 is linker 1; that stretch reads RQKQASHAQLGDA. The interval 149–247 is coil 1B; that stretch reads YDQEIRELRA…EEEVADLLAQ (99 aa). Serine 225 carries the phosphoserine modification. The segment at 248-264 is linker 12; the sequence is IQASHITVERKDYLKTD. Residues 265 to 286 form a coil 2A region; that stretch reads ISTALKEIRSQLECHSDQNMHQ. Residues 287–290 form a linker 2 region; that stretch reads AEEW. The segment at 291-411 is coil 2B; sequence FKCRYAKLTE…KLLEGEETRF (121 aa). Tyrosine 319 carries the post-translational modification Phosphotyrosine. Serine 345, serine 417, and serine 429 each carry phosphoserine. Positions 412–845 are tail; sequence STFSGSITGP…HAIVKEVTQG (434 aa). A glycan (O-linked (GlcNAc) threonine) is linked at threonine 431. Phosphoserine is present on residues serine 467 and serine 483. Positions 483–783 are disordered; it reads SAKEEKEEAE…GEDRSDDKVV (301 aa). Over residues 489 to 499 the composition is skewed to acidic residues; sequence EEAEEKEEEPE. A compositionally biased stretch (basic and acidic residues) spans 500–510; that stretch reads VEKSPVKSPEA. Serine 503 and serine 507 each carry phosphoserine. The span at 511–533 shows a compositional bias: acidic residues; sequence KEEEEGEKEEEEEGQEEEEEEDE. Over residues 534 to 553 the composition is skewed to basic and acidic residues; sequence GVKSDQAEEGGSEKEGSSEK. Residues serine 537, serine 545, serine 550, and serine 551 each carry the phosphoserine modification. Over residues 554–575 the composition is skewed to acidic residues; the sequence is DEGEQEEEGETEAEGEGEEAEA. Phosphothreonine is present on threonine 564. Positions 576 to 603 are enriched in basic and acidic residues; it reads KEEKKTEGKVEEMAIKEEIKVEKPEKAK. 9 positions are modified to phosphoserine: serine 604, serine 609, serine 643, serine 667, serine 687, serine 713, serine 721, serine 751, and serine 767. 2 stretches are compositionally biased toward basic and acidic residues: residues 610–675 and 687–709; these read PVEE…KAVE and SLEKDTKEEKPQQQEKVKEKAEE. Basic and acidic residues-rich tracts occupy residues 718 to 730 and 746 to 758; these read GDKSPQESKKEDI and TQEKGSGQEEEKG. The segment covering 769 to 783 has biased composition (basic and acidic residues); it reads AEEKKGEDRSDDKVV.

It belongs to the intermediate filament family. Forms heterodimers with NEFL; which can further hetero-oligomerize (in vitro). Forms heterodimers with INA (in vitro). Post-translationally, there are a number of repeats of the tripeptide K-S-P, NFM is phosphorylated on a number of the serines in this motif. It is thought that phosphorylation of NFM results in the formation of interfilament cross bridges that are important in the maintenance of axonal caliber. In terms of processing, phosphorylation seems to play a major role in the functioning of the larger neurofilament polypeptides (NF-M and NF-H), the levels of phosphorylation being altered developmentally and coincidentally with a change in the neurofilament function. Phosphorylated in the head and rod regions by the PKC kinase PKN1, leading to the inhibition of polymerization. In terms of tissue distribution, expressed in the dorsal root ganglion neurons (at protein level).

It localises to the cytoplasm. The protein resides in the cytoskeleton. The protein localises to the cell projection. It is found in the axon. Its function is as follows. Neurofilaments usually contain three intermediate filament proteins: NEFL, NEFM, and NEFH which are involved in the maintenance of neuronal caliber. May additionally cooperate with the neuronal intermediate filament proteins PRPH and INA to form neuronal filamentous networks. This is Neurofilament medium polypeptide (Nefm) from Rattus norvegicus (Rat).